Consider the following 254-residue polypeptide: 3-deoxy-manno-octulosonate cytidylyltransferase (254 aa).

This sequence belongs to the KdsB family.

Its subcellular location is the cytoplasm. It carries out the reaction 3-deoxy-alpha-D-manno-oct-2-ulosonate + CTP = CMP-3-deoxy-beta-D-manno-octulosonate + diphosphate. The protein operates within nucleotide-sugar biosynthesis; CMP-3-deoxy-D-manno-octulosonate biosynthesis; CMP-3-deoxy-D-manno-octulosonate from 3-deoxy-D-manno-octulosonate and CTP: step 1/1. It functions in the pathway bacterial outer membrane biogenesis; lipopolysaccharide biosynthesis. In terms of biological role, activates KDO (a required 8-carbon sugar) for incorporation into bacterial lipopolysaccharide in Gram-negative bacteria. The chain is 3-deoxy-manno-octulosonate cytidylyltransferase from Bordetella parapertussis (strain 12822 / ATCC BAA-587 / NCTC 13253).